A 263-amino-acid chain; its full sequence is Pimeloyl-[acyl-carrier protein] methyl ester esterase (263 aa).

Substrate-binding positions include Trp-28, 86-87 (SL), and 149-153 (FLAIQ). The active-site Nucleophile is Ser-86. Residues Asp-213 and His-240 contribute to the active site. His-240 contacts substrate.

The protein belongs to the AB hydrolase superfamily. Carboxylesterase BioH family. As to quaternary structure, monomer.

The protein localises to the cytoplasm. It carries out the reaction 6-carboxyhexanoyl-[ACP] methyl ester + H2O = 6-carboxyhexanoyl-[ACP] + methanol + H(+). It functions in the pathway cofactor biosynthesis; biotin biosynthesis. Its function is as follows. The physiological role of BioH is to remove the methyl group introduced by BioC when the pimeloyl moiety is complete. It allows to synthesize pimeloyl-ACP via the fatty acid synthetic pathway through the hydrolysis of the ester bonds of pimeloyl-ACP esters. This chain is Pimeloyl-[acyl-carrier protein] methyl ester esterase, found in Shewanella oneidensis (strain ATCC 700550 / JCM 31522 / CIP 106686 / LMG 19005 / NCIMB 14063 / MR-1).